The chain runs to 98 residues: Cell division topological specificity factor (98 aa).

It belongs to the MinE family.

Prevents the cell division inhibition by proteins MinC and MinD at internal division sites while permitting inhibition at polar sites. This ensures cell division at the proper site by restricting the formation of a division septum at the midpoint of the long axis of the cell. In Nitrosomonas europaea (strain ATCC 19718 / CIP 103999 / KCTC 2705 / NBRC 14298), this protein is Cell division topological specificity factor.